We begin with the raw amino-acid sequence, 273 residues long: Tryptophan synthase alpha chain (273 aa).

Catalysis depends on proton acceptor residues E56 and D67.

It belongs to the TrpA family. In terms of assembly, tetramer of two alpha and two beta chains.

The catalysed reaction is (1S,2R)-1-C-(indol-3-yl)glycerol 3-phosphate + L-serine = D-glyceraldehyde 3-phosphate + L-tryptophan + H2O. The protein operates within amino-acid biosynthesis; L-tryptophan biosynthesis; L-tryptophan from chorismate: step 5/5. Functionally, the alpha subunit is responsible for the aldol cleavage of indoleglycerol phosphate to indole and glyceraldehyde 3-phosphate. The chain is Tryptophan synthase alpha chain from Shewanella baltica (strain OS185).